A 426-amino-acid chain; its full sequence is Gamma-glutamyl phosphate reductase (426 aa).

This sequence belongs to the gamma-glutamyl phosphate reductase family.

The protein resides in the cytoplasm. It carries out the reaction L-glutamate 5-semialdehyde + phosphate + NADP(+) = L-glutamyl 5-phosphate + NADPH + H(+). Its pathway is amino-acid biosynthesis; L-proline biosynthesis; L-glutamate 5-semialdehyde from L-glutamate: step 2/2. Its function is as follows. Catalyzes the NADPH-dependent reduction of L-glutamate 5-phosphate into L-glutamate 5-semialdehyde and phosphate. The product spontaneously undergoes cyclization to form 1-pyrroline-5-carboxylate. This is Gamma-glutamyl phosphate reductase from Ralstonia nicotianae (strain ATCC BAA-1114 / GMI1000) (Ralstonia solanacearum).